The chain runs to 501 residues: Ammonium transporter 2 member 2 (501 aa).

A run of 11 helical transmembrane segments spans residues 35-55 (VAAT…YGSI), 64-84 (SAFM…LVGF), 140-160 (LVLF…GSLL), 174-194 (LWLL…GFLY), 203-223 (GGYV…YWVG), 238-258 (ILLM…FNGG), 274-294 (TNVS…IFFG), 298-318 (VIGA…GAGL), 322-342 (WSAM…MMIL), 356-376 (LAVF…TGLL), and 412-432 (FVTV…GLFI).

It belongs to the ammonia transporter channel (TC 1.A.11.2) family.

Its subcellular location is the membrane. In terms of biological role, involved in ammonium transport. This Oryza sativa subsp. japonica (Rice) protein is Ammonium transporter 2 member 2 (AMT2-2).